The following is a 180-amino-acid chain: NADH-quinone oxidoreductase subunit I (180 aa).

4Fe-4S ferredoxin-type domains are found at residues 48-80 (IVLTRDPDGDERCVACNLCAVACPVGCISLQKA) and 90-119 (EFFRINFSRCIFCGLCEEACPTTAIQLTPD). [4Fe-4S] cluster contacts are provided by C60, C63, C66, C70, C99, C102, C105, and C109. The tract at residues 160-180 (GKPKGSAQKEAAPIDVKSILP) is disordered.

This sequence belongs to the complex I 23 kDa subunit family. In terms of assembly, NDH-1 is composed of 14 different subunits. Subunits NuoA, H, J, K, L, M, N constitute the membrane sector of the complex. The cofactor is [4Fe-4S] cluster.

The protein resides in the cell inner membrane. It carries out the reaction a quinone + NADH + 5 H(+)(in) = a quinol + NAD(+) + 4 H(+)(out). Its function is as follows. NDH-1 shuttles electrons from NADH, via FMN and iron-sulfur (Fe-S) centers, to quinones in the respiratory chain. The immediate electron acceptor for the enzyme in this species is believed to be ubiquinone. Couples the redox reaction to proton translocation (for every two electrons transferred, four hydrogen ions are translocated across the cytoplasmic membrane), and thus conserves the redox energy in a proton gradient. This Tolumonas auensis (strain DSM 9187 / NBRC 110442 / TA 4) protein is NADH-quinone oxidoreductase subunit I.